The following is a 283-amino-acid chain: Phosphatidylserine decarboxylase proenzyme (283 aa).

Active-site charge relay system; for autoendoproteolytic cleavage activity residues include aspartate 96, histidine 152, and serine 250. Serine 250 (schiff-base intermediate with substrate; via pyruvic acid; for decarboxylase activity) is an active-site residue. Serine 250 carries the post-translational modification Pyruvic acid (Ser); by autocatalysis.

The protein belongs to the phosphatidylserine decarboxylase family. PSD-B subfamily. Prokaryotic type I sub-subfamily. Heterodimer of a large membrane-associated beta subunit and a small pyruvoyl-containing alpha subunit. Pyruvate serves as cofactor. In terms of processing, is synthesized initially as an inactive proenzyme. Formation of the active enzyme involves a self-maturation process in which the active site pyruvoyl group is generated from an internal serine residue via an autocatalytic post-translational modification. Two non-identical subunits are generated from the proenzyme in this reaction, and the pyruvate is formed at the N-terminus of the alpha chain, which is derived from the carboxyl end of the proenzyme. The autoendoproteolytic cleavage occurs by a canonical serine protease mechanism, in which the side chain hydroxyl group of the serine supplies its oxygen atom to form the C-terminus of the beta chain, while the remainder of the serine residue undergoes an oxidative deamination to produce ammonia and the pyruvoyl prosthetic group on the alpha chain. During this reaction, the Ser that is part of the protease active site of the proenzyme becomes the pyruvoyl prosthetic group, which constitutes an essential element of the active site of the mature decarboxylase.

Its subcellular location is the cell membrane. It catalyses the reaction a 1,2-diacyl-sn-glycero-3-phospho-L-serine + H(+) = a 1,2-diacyl-sn-glycero-3-phosphoethanolamine + CO2. The protein operates within phospholipid metabolism; phosphatidylethanolamine biosynthesis; phosphatidylethanolamine from CDP-diacylglycerol: step 2/2. In terms of biological role, catalyzes the formation of phosphatidylethanolamine (PtdEtn) from phosphatidylserine (PtdSer). The sequence is that of Phosphatidylserine decarboxylase proenzyme from Acinetobacter baumannii (strain ACICU).